We begin with the raw amino-acid sequence, 378 residues long: Chitinase (378 aa).

Positions 1–28 are cleaved as a signal peptide; that stretch reads MNFTVKYSFLVICLLCCLLSTYVSVIEG. One can recognise a GH18 domain in the interval 53-378; that stretch reads GIIQGYYPSW…AIEYFVESLH (326 aa). The active-site Proton donor is E174. Cysteines 220 and 230 form a disulfide.

It belongs to the glycosyl hydrolase 18 family. As to quaternary structure, forms a hetero-multimeric, high molecular weight complex composed of at least CHT1, SOAP AND WARP. Within the complex, may interact with WARP via a disulfide bond.

The protein resides in the secreted. The protein localises to the cytoplasmic vesicle. It localises to the secretory vesicle. It is found in the microneme. The catalysed reaction is Random endo-hydrolysis of N-acetyl-beta-D-glucosaminide (1-&gt;4)-beta-linkages in chitin and chitodextrins.. Inhibited by allosamidin. Functionally, endochitinase that cleaves beta-1,4-linkages between tri- and tetramers of N-acetylglucosamine (GlcNAc) from penta- and hexameric chitin oligomers. Does not cleave smaller chitin oligosaccharides. Required to cross the acellular, chitin-containing peritrophic matrix (PM) which is formed around the ingested blood meal in the mosquito midgut allowing the ookinete to invade the mosquito gut epithelium. The polypeptide is Chitinase (Plasmodium falciparum (isolate 3D7)).